We begin with the raw amino-acid sequence, 274 residues long: Shikimate dehydrogenase (NADP(+)) (274 aa).

Residues 14–16 and T60 contribute to the shikimate site; that span reads SKS. K64 (proton acceptor) is an active-site residue. Residue E76 participates in NADP(+) binding. Shikimate-binding residues include N85 and D101. Residues 126–130, 150–155, and M214 contribute to the NADP(+) site; these read GAGGA and NRTARK. Y216 lines the shikimate pocket. G238 contacts NADP(+).

The protein belongs to the shikimate dehydrogenase family. As to quaternary structure, homodimer.

It catalyses the reaction shikimate + NADP(+) = 3-dehydroshikimate + NADPH + H(+). It functions in the pathway metabolic intermediate biosynthesis; chorismate biosynthesis; chorismate from D-erythrose 4-phosphate and phosphoenolpyruvate: step 4/7. Its function is as follows. Involved in the biosynthesis of the chorismate, which leads to the biosynthesis of aromatic amino acids. Catalyzes the reversible NADPH linked reduction of 3-dehydroshikimate (DHSA) to yield shikimate (SA). This Pseudomonas aeruginosa (strain ATCC 15692 / DSM 22644 / CIP 104116 / JCM 14847 / LMG 12228 / 1C / PRS 101 / PAO1) protein is Shikimate dehydrogenase (NADP(+)).